A 229-amino-acid chain; its full sequence is MKTNGKKFRAASEQRVLGKSYEAKQAIALVKQMAFAKFDETVEIAIRLGVDPRHADQVVRGTVVLPAGTGKTMRVLVIATGAKVQEAQEAGADFVGTEFLQKIKDGWLDFDVMIATPDQMGQIGQLGRVLGPRGLMPNPKAGTVTFDVSKAVRESKGGKIEFRVDKGGNVHAPIGKVSFAPDQLETNFSALMDTIVRAKPAAAKGLYIRNVAISSSMGPGVTIDTTPFR.

The protein belongs to the universal ribosomal protein uL1 family. As to quaternary structure, part of the 50S ribosomal subunit.

Binds directly to 23S rRNA. The L1 stalk is quite mobile in the ribosome, and is involved in E site tRNA release. Functionally, protein L1 is also a translational repressor protein, it controls the translation of the L11 operon by binding to its mRNA. The polypeptide is Large ribosomal subunit protein uL1 (Gemmatimonas aurantiaca (strain DSM 14586 / JCM 11422 / NBRC 100505 / T-27)).